The chain runs to 210 residues: Guanylate kinase (210 aa).

Residues 5–184 form the Guanylate kinase-like domain; that stretch reads GLLIVFSGPS…AAERVKHIIE (180 aa). 12–19 contacts ATP; the sequence is GPSGVGKG.

The protein belongs to the guanylate kinase family.

It is found in the cytoplasm. It carries out the reaction GMP + ATP = GDP + ADP. In terms of biological role, essential for recycling GMP and indirectly, cGMP. The chain is Guanylate kinase from Streptococcus mutans serotype c (strain ATCC 700610 / UA159).